The following is a 575-amino-acid chain: Acyloxyacyl hydrolase (575 aa).

A signal peptide spans 1–23 (MQSPWKILTVAPLFLLLSLQSSA). The propeptide occupies 24-34 (SPANDDQSRPS). The Saposin B-type domain occupies 37-118 (NGHTCVGCVL…HTLEFCKQNT (82 aa)). The segment at 38–70 (GHTCVGCVLVVSVIEQLAQVHNSTVQASMERLC) is important for enzyme activity, localization to cytoplasmic vesicles, and protein stability. Cystine bridges form between cysteine 41–cysteine 114, cysteine 44–cysteine 108, cysteine 70–cysteine 83, cysteine 123–cysteine 453, cysteine 160–cysteine 169, cysteine 206–cysteine 230, cysteine 249–cysteine 329, and cysteine 376–cysteine 459. A glycan (N-linked (GlcNAc...) asparagine) is linked at asparagine 59. The tract at residues 173–177 (KLAME) is lipopolysaccharide binding. The Ca(2+) site is built by aspartate 184, aspartate 186, aspartate 188, tyrosine 190, aspartate 205, asparagine 207, aspartate 208, aspartate 210, valine 213, aspartate 223, aspartate 227, asparagine 229, asparagine 231, isoleucine 233, and glutamate 245. N-linked (GlcNAc...) asparagine glycosylation is present at asparagine 207. Serine 263 is an active-site residue. Asparagine 409 and asparagine 466 each carry an N-linked (GlcNAc...) asparagine glycan.

In terms of assembly, heterodimer of the large and small subunits; disulfide-linked. The cofactor is Ca(2+). Cleaved into a large and a small subunit. In terms of processing, the small subunit is N-glycosylated.

Its subcellular location is the secreted. The protein resides in the cytoplasmic vesicle. The enzyme catalyses a 3-(acyloxy)acyl derivative of bacterial toxin + H2O = a 3-hydroxyacyl derivative of bacterial toxin + a fatty acid + H(+). With respect to regulation, inhibited by EDTA. In terms of biological role, removes the secondary (acyloxyacyl-linked) fatty acyl chains from the lipid A region of bacterial lipopolysaccharides. By breaking down LPS, terminates the host response to bacterial infection and prevents prolonged and damaging inflammatory responses. In peritoneal macrophages, seems to be important for recovery from a state of immune tolerance following infection by Gram-negative bacteria. The chain is Acyloxyacyl hydrolase from Homo sapiens (Human).